A 92-amino-acid polypeptide reads, in one-letter code: Neurophysin 2 (92 aa).

Disulfide bonds link Cys-7–Cys-51, Cys-10–Cys-24, Cys-18–Cys-41, Cys-25–Cys-31, Cys-58–Cys-70, Cys-64–Cys-82, and Cys-71–Cys-76.

This sequence belongs to the vasopressin/oxytocin family.

The protein localises to the secreted. In terms of biological role, neurophysin 2 specifically binds the midbrain peptide hormone vasopressin. The chain is Neurophysin 2 (AVP) from Equus caballus (Horse).